Reading from the N-terminus, the 179-residue chain is B-cell acute lymphoblastic leukemia-expressed protein (179 aa).

Disordered stretches follow at residues 1-20 (MMKD…TDLQ) and 65-86 (RDTP…RGKA). Positions 10-20 (SWASEESTDLQ) are enriched in polar residues.

This chain is B-cell acute lymphoblastic leukemia-expressed protein (BLACE), found in Homo sapiens (Human).